We begin with the raw amino-acid sequence, 112 residues long: DNA-binding protein Bv3F (112 aa).

The segment at 65–92 (KRNSKRMSTVPKYRDPATGKTWSGRGRQ) is disordered. DNA-binding regions lie at residues 89–94 (RGRQPA) and 89–95 (RGRQPAW).

This sequence belongs to the histone-like protein H-NS family. As to quaternary structure, homodimer that oligomerizes on DNA into higher-order complexes that form bridges between disparate regions of DNA compacting it.

The protein localises to the cytoplasm. It is found in the nucleoid. A DNA-binding protein implicated in transcriptional repression and chromosome organization and compaction. Binds in the minor groove of AT-rich DNA. Binds nucleation sites in AT-rich DNA and bridges them, forming higher-order nucleoprotein complexes and condensing the chromosome. As many horizontally transferred genes are AT-rich, it plays a central role in silencing foreign genes. This is DNA-binding protein Bv3F from Burkholderia vietnamiensis (strain G4 / LMG 22486) (Burkholderia cepacia (strain R1808)).